The chain runs to 1124 residues: SH3 and PX domain-containing protein 2A (1124 aa).

The 125-residue stretch at 4–128 (YCVQDATVVD…RFFEARPEDV (125 aa)) folds into the PX domain. Positions 166-225 (MILEQYVVVSNYKKQENSELSLQAGEVVDVIEKNESGWWFVSTSEEQGWVPATYLEAQNG) constitute an SH3 1 domain. Threonine 256 is subject to Phosphothreonine. An SH3 2 domain is found at 266-325 (SREEKYVTVQPYTSQSKDEIGFEKGVTVEVIRKNLEGWWYIRYLGKEGWAPASYLKKAKD). Phosphoserine is present on residues serine 405 and serine 420. Disordered regions lie at residues 414-443 (QRAQ…PKPP), 504-672 (RKKP…KLKA), 692-830 (SVTI…PKKE), and 886-952 (YLVA…GKTS). An SH3 3 domain is found at 447–506 (SVEVEYYTIAEFQSCISDGISFRGGQKAEVIDKNSGGWWYVQIGEKEGWAPASYIDKRKK). Serine 546 and serine 566 each carry phosphoserine. Over residues 575–585 (SGDRGSGDKHP) the composition is skewed to basic and acidic residues. At serine 592 the chain carries Phosphoserine. Residues 607-619 (SSEDVALEEETIY) are compositionally biased toward acidic residues. Low complexity-rich tracts occupy residues 633-669 (SARG…SLLK) and 692-709 (SVTI…SSLS). Serine 643 carries the post-translational modification Phosphoserine. Positions 713–739 (GDLKPRSASDAGIRDTPKVGTKKDPDV) are enriched in basic and acidic residues. Threonine 728 is modified (phosphothreonine). Serine 764, serine 766, and serine 812 each carry phosphoserine. Threonine 822 bears the Phosphothreonine mark. The SH3 4 domain occupies 833 to 892 (GQGATYVTCSAYQKVQDSEISFPEGAEVHVLEKAESGWWYVRFGELEGWAPSHYLVAEEN). Residues 907–937 (SSQNEGKSDSLEKIEKRVQALNTVNQSKRAT) are a coiled coil. Basic and acidic residues predominate over residues 912–924 (GKSDSLEKIEKRV). The segment covering 926–935 (ALNTVNQSKR) has biased composition (polar residues). Phosphoserine is present on residues serine 993, serine 1007, serine 1008, and serine 1029. The segment at 1020-1050 (KGRLAERAASQGSESPLLPTQRKGIPVSPVR) is disordered. Residues 1063-1124 (NLKDVYISIA…VPSNYLEKKN (62 aa)) enclose the SH3 5 domain.

It belongs to the SH3PXD2 family. As to quaternary structure, interacts with ADAM12, ADAM15 and ADAM19. Interacts with NOXO1. Interacts (via SH3 domains) with NOXA1; the interaction is direct. Interacts (via N-terminus) with CYBA. Interacts with FASLG. Interacts (via PX domain) with RAB40B (GTP-bound); interaction promotes invadopodia-mediated extracellular matrix degradation. Post-translationally, tyrosine phosphorylated by SRC. Phosphorylation plays a regulatory role in the protein localization. The intramolecular interaction of the PX domain with the third SH3 domain maintains the protein in the cytoplasm and phosphorylation disrupts this interaction, resulting in the redistribution of the protein from cytoplasm to the perimembrane region. Phosphorylated on serine upon DNA damage, probably by ATM or ATR. As to expression, widely expressed. Not found in the spleen and testis.

Its subcellular location is the cytoplasm. The protein localises to the cell projection. It localises to the podosome. Adapter protein involved in invadopodia and podosome formation, extracellular matrix degradation and invasiveness of some cancer cells. Binds matrix metalloproteinases (ADAMs), NADPH oxidases (NOXs) and phosphoinositides. Acts as an organizer protein that allows NOX1- or NOX3-dependent reactive oxygen species (ROS) generation and ROS localization. In association with ADAM12, mediates the neurotoxic effect of amyloid-beta peptide. In Mus musculus (Mouse), this protein is SH3 and PX domain-containing protein 2A.